Consider the following 2169-residue polypeptide: Voltage-dependent L-type calcium channel subunit alpha-1C (2169 aa).

At 1–153 (MVPLVQPTTP…RACISIVEWK (153 aa)) the chain is on the cytoplasmic side. Residues 76-97 (GAALSWQAAIDAGRQAKLMGSA) form a calmodulin-binding region. Polar residues predominate over residues 98–108 (GNTTISTVSST). Residues 98 to 127 (GNTTISTVSSTQRKRQQYGKPKKQSGTTAT) are disordered. The segment covering 109–120 (QRKRQQYGKPKK) has biased composition (basic residues). One copy of the I repeat lies at 140–437 (NPIRRACISI…LVLGVLSGEF (298 aa)). A helical transmembrane segment spans residues 154–172 (PFEIIILLTIFANCVALAI). Residues 173–187 (YIPFPEDDSNATNSN) are Extracellular-facing. N-linked (GlcNAc...) asparagine glycosylation is present at Asn-182. Residues 188–208 (LERVEYLFLIIFTVEAFLKVI) form a helical membrane-spanning segment. Residues 209-217 (AYGLLFHPN) lie on the Cytoplasmic side of the membrane. The chain crosses the membrane as a helical span at residues 218–238 (AYLRNGWNLLDFIIVVVGLFS). At 239-261 (AILEQATKADGANALGGKGAGFD) the chain is on the extracellular side. Residues 262 to 280 (VKALRAFRVLRPLRLVSGV) form a helical membrane-spanning segment. The Cytoplasmic portion of the chain corresponds to 281–297 (PSLQVVLNSIIKAMVPL). The chain crosses the membrane as a helical span at residues 298–319 (LHTALLVLFVIIIYAIIGLELF). Topologically, residues 320–379 (MGKMHKTCYNQEGITDVPAEEDPSPCALESGHGRQCQNGTVCKPGWDGPKHGITNFDNFA) are extracellular. A disulfide bridge links Cys-345 with Cys-361. The N-linked (GlcNAc...) asparagine glycan is linked to Asn-357. The segment at residues 380 to 401 (FAMLTVFQCITMEGWTDVLYWM) is an intramembrane region (pore-forming). Positions 390-393 (TMEG) match the Selectivity filter of repeat I motif. Glu-392 provides a ligand contact to Ca(2+). The Extracellular segment spans residues 402 to 409 (QDAMGYEL). The helical transmembrane segment at 410–430 (PWVYFVSLVIFGSFFVLNLVL) threads the bilayer. At 431 to 553 (GVLSGEFSKE…RKCRAAVKSN (123 aa)) the chain is on the cytoplasmic side. The segment at 457–474 (QQLEEDLKGYLDWITQAE) is AID/alpha-interaction domain; mediates interaction with the beta subunit. Residues 478–510 (PENEDEGVDEEKPRNMSMPTSETESVNTENVAG) form a disordered region. Residues 494 to 507 (SMPTSETESVNTEN) are compositionally biased toward polar residues. Phosphoserine is present on Ser-498. At Thr-505 the chain carries Phosphothreonine. One copy of the II repeat lies at 539-785 (NRFCRRKCRA…VFLAIAVDNL (247 aa)). The chain crosses the membrane as a helical span at residues 554-572 (VFYWLVIFLVFLNTLTIAS). At 573–583 (EHYNQPHWLTE) the chain is on the extracellular side. Residues 584-604 (VQDTANKALLALFTAEMLLKM) form a helical membrane-spanning segment. At 605-615 (YSLGLQAYFVS) the chain is on the cytoplasmic side. A helical membrane pass occupies residues 616 to 635 (LFNRLDCFIVCGGILETILV). Residues 636–644 (ETKIMSPLG) are Extracellular-facing. The helical transmembrane segment at 645–663 (ISVLRCVRLLRIFKITRYW) threads the bilayer. Over 664-682 (NSLSNLVASLLNSVRSIAS) the chain is Cytoplasmic. The chain crosses the membrane as a helical span at residues 683-702 (LLLLLFLFIIIFSLLGMQLF). The Extracellular segment spans residues 703 to 722 (GGKFNFDEMRTRRSTFDNFP). An intramembrane region (pore-forming) is located at residues 723-744 (QSLLTVFQILTGEDWNSVMYDG). A Selectivity filter of repeat II motif is present at residues 733–736 (TGED). A Ca(2+)-binding site is contributed by Glu-735. The Extracellular portion of the chain corresponds to 745-754 (IMAYGGPSFP). A helical transmembrane segment spans residues 755–774 (GMLVCIYFIILFICGNYILL). The Cytoplasmic portion of the chain corresponds to 775 to 929 (NVFLAIAVDN…LQCHRIVNDT (155 aa)). The tract at residues 793–890 (SAQKEEEEEK…EMPVGPRPRP (98 aa)) is disordered. Over residues 812–835 (SPEKKQEVVEKPAVEETKEEKIEL) the composition is skewed to basic and acidic residues. 2 positions are modified to phosphoserine: Ser-837 and Ser-844. The interaction with STAC2 stretch occupies residues 858–905 (NENEDKSPYPNPDAAGEEDEEEPEMPVGPRPRPLSELHLKEKAVPMPE). Over residues 872-881 (AGEEDEEEPE) the composition is skewed to acidic residues. An III repeat occupies 916–1198 (NRFRLQCHRI…IFVGFVIVTF (283 aa)). Residues 930 to 948 (IFTNLILFFILLSSISLAA) form a helical membrane-spanning segment. Topologically, residues 949–960 (EDPVQHTSFRNH) are extracellular. Residues 961 to 980 (ILFYFDIVFTTIFTIEIALK) traverse the membrane as a helical segment. At 981–996 (MTAYGAFLHKGSFCRN) the chain is on the cytoplasmic side. Residues 997 to 1015 (YFNILDLLVVSVSLISFGI) form a helical membrane-spanning segment. Residues 1016–1022 (QSSAINV) lie on the Extracellular side of the membrane. A helical transmembrane segment spans residues 1023 to 1041 (VKILRVLRVLRPLRAINRA). Topologically, residues 1042 to 1060 (KGLKHVVQCVFVAIRTIGN) are cytoplasmic. The chain crosses the membrane as a helical span at residues 1061 to 1080 (IVIVTTLLQFMFACIGVQLF). Residues 1081 to 1130 (KGKLYTCSDSSKQTEAECKGNYITYKDGEVDQPIIQPRSWENSKFDFDNV) lie on the Extracellular side of the membrane. Cysteines 1087 and 1098 form a disulfide. A dihydropyridine binding region spans residues 1118–1207 (RSWENSKFDF…FQEQGEQEYK (90 aa)). Positions 1131–1151 (LAAMMALFTVSTFEGWPELLY) form an intramembrane region, pore-forming. The short motif at 1142-1145 (TFEG) is the Selectivity filter of repeat III element. Glu-1144 contributes to the Ca(2+) binding site. Over 1152 to 1168 (RSIDSHTEDKGPIYNYR) the chain is Extracellular. A helical transmembrane segment spans residues 1169-1190 (VEISIFFIIYIIIIAFFMMNIF). Residues 1191-1248 (VGFVIVTFQEQGEQEYKNCELDKNQRQCVEYALKARPLRRYIPKNQHQYKVWYVVNST) lie on the Cytoplasmic side of the membrane. One copy of the IV repeat lies at 1235-1508 (NQHQYKVWYV…LFVAVVMDNF (274 aa)). Residues 1249–1270 (YFEYLMFVLILLNTICLAMQHY) traverse the membrane as a helical segment. The Extracellular segment spans residues 1271–1278 (GQSCLFKI). Residues 1279-1300 (AMNILNMLFTGLFTVEMILKLI) traverse the membrane as a helical segment. Over 1301 to 1310 (AFKPKHYFCD) the chain is Cytoplasmic. The helical transmembrane segment at 1311–1330 (AWNTFDALIVVGSIVDIAIT) threads the bilayer. The Extracellular portion of the chain corresponds to 1331 to 1353 (EVNPAEHTQCSPSMNAEENSRIS). Residues 1354–1372 (ITFFRLFRVMRLVKLLSRG) form a helical membrane-spanning segment. Over 1373 to 1390 (EGIRTLLWTFIKSFQALP) the chain is Cytoplasmic. A helical membrane pass occupies residues 1391–1411 (YVALLIVMLFFIYAVIGMQVF). Topologically, residues 1412–1433 (GKIALNDTTEINRNNNFQTFPQ) are extracellular. N-linked (GlcNAc...) asparagine glycosylation is present at Asn-1417. An intramembrane region (pore-forming) is located at residues 1434-1452 (AVLLLFRCATGEAWQDIML). The Selectivity filter of repeat IV signature appears at 1443–1446 (TGEA). Over 1453–1480 (ACMPGKKCAPESDPSNSTEGETPCGSSF) the chain is Extracellular. The interval 1459-1527 (KCAPESDPSN…LGPHHLDEFK (69 aa)) is dihydropyridine binding. A disulfide bridge connects residues Cys-1460 and Cys-1476. A glycan (N-linked (GlcNAc...) asparagine) is linked at Asn-1468. Positions 1473-1515 (ETPCGSSFAVFYFISFYMLCAFLIINLFVAVVMDNFDYLTRDW) are phenylalkylamine binding. A helical transmembrane segment spans residues 1481 to 1505 (AVFYFISFYMLCAFLIINLFVAVVM). Residues 1506–2169 (DNFDYLTRDW…ADSRVHVRSL (664 aa)) are Cytoplasmic-facing. The interval 1640 to 1667 (DEVTVGKFYATFLIQEYFRKFKKRKEQG) is important for interaction with STAC1, STAC2 and STAC3. Residues 1646–1666 (KFYATFLIQEYFRKFKKRKEQ) are calmodulin-binding IQ region. The interval 1680–1699 (LQAGLRTLHDIGPEIRRAIS) is important for localization in at the junctional membrane. Phosphoserine is present on residues Ser-1699 and Ser-1720. 2 disordered regions span residues 1761–1793 (KAGNNQGDTESPSHEKLVDSTFTPSSYSSTGSN) and 1894–1920 (ENRQLTPPEEDKGDTRPSPKKGFLRSA). Positions 1780 to 1792 (STFTPSSYSSTGS) are enriched in polar residues. Over residues 1894–1910 (ENRQLTPPEEDKGDTRP) the composition is skewed to basic and acidic residues. Position 1927 is a phosphoserine (Ser-1927).

It belongs to the calcium channel alpha-1 subunit (TC 1.A.1.11) family. CACNA1C subfamily. As to quaternary structure, component of a calcium channel complex consisting of a pore-forming alpha subunit (CACNA1C) and ancillary beta, gamma and delta subunits. The channel complex contains alpha, beta, gamma and delta subunits in a 1:1:1:1 ratio, i.e. it contains only one of each type of subunit. CACNA1C channel activity is modulated by ancillary subunits, such as CACNB1, CACNB2, CACNB3, CACNA2D1 and CACNA2D4. Interacts with CACNB1. Interacts with CACNB2. Identified in a complex with CACNA2D4 and CACNB3. Interacts with CACNB3. Interacts with CACNA2D1. Interacts with CACNA2D4. Interacts with the gamma subunits CACNG4, CACNG6, CACNG7 and CACNG8. Interacts with CALM1. Interacts (via the N-terminus and the C-terminal C and IQ motifs) with CABP1; this inhibits Ca(2+)-dependent channel inactivation. The binding via the C motif is calcium independent whereas the binding via IQ requires the presence of calcium and is mutually exclusive with calmodulin binding. The binding to the cytoplasmic N-terminal domain is calcium independent but is essential for the channel modulation. Interacts (via C-terminal CDB motif) with CABP5; in a calcium-dependent manner. Interacts with CIB1; the interaction increases upon cardiomyocytes hypertrophy. Interacts with STAC2 and STAC3; this inhibits channel inactivation. Post-translationally, phosphorylation by PKA at Ser-1927 activates the channel. Elevated levels of blood glucose lead to increased phosphorylation by PKA. In terms of tissue distribution, expressed in heart. Expressed in uterus.

It localises to the cell membrane. Its subcellular location is the sarcolemma. The protein resides in the perikaryon. The protein localises to the postsynaptic density membrane. It is found in the cell projection. It localises to the dendrite. Its subcellular location is the T-tubule. It catalyses the reaction Ca(2+)(in) = Ca(2+)(out). With respect to regulation, inhibited by dihydropyridines (DHP), such as isradipine. Inhibited by nifedipine. Channel activity is regulated by Ca(2+) and calmodulin. Binding of STAC1, STAC2 or STAC3 to a region that overlaps with the calmodulin binding site inhibits channel inactivation by Ca(2+) and calmodulin. Binding of calmodulin or CABP1 at the same regulatory sites results in opposite effects on the channel function. Shear stress and pressure increases calcium channel activity. Pore-forming, alpha-1C subunit of the voltage-gated calcium channel that gives rise to L-type calcium currents. Mediates influx of calcium ions into the cytoplasm, and thereby triggers calcium release from the sarcoplasm. Plays an important role in excitation-contraction coupling in the heart. Required for normal heart development and normal regulation of heart rhythm. Required for normal contraction of smooth muscle cells in blood vessels and in the intestine. Essential for normal blood pressure regulation via its role in the contraction of arterial smooth muscle cells. Long-lasting (L-type) calcium channels belong to the 'high-voltage activated' (HVA) group. This Cavia porcellus (Guinea pig) protein is Voltage-dependent L-type calcium channel subunit alpha-1C (CACNA1C).